The sequence spans 281 residues: UDP-N-acetylenolpyruvoylglucosamine reductase (281 aa).

The region spanning 17-180 (VGGKAKKLII…LSATFKFDNG (164 aa)) is the FAD-binding PCMH-type domain. The active site involves arginine 159. Serine 206 acts as the Proton donor in catalysis. Residue glutamate 276 is part of the active site.

It belongs to the MurB family. The cofactor is FAD.

It is found in the cytoplasm. It carries out the reaction UDP-N-acetyl-alpha-D-muramate + NADP(+) = UDP-N-acetyl-3-O-(1-carboxyvinyl)-alpha-D-glucosamine + NADPH + H(+). The protein operates within cell wall biogenesis; peptidoglycan biosynthesis. Its function is as follows. Cell wall formation. The protein is UDP-N-acetylenolpyruvoylglucosamine reductase of Fusobacterium nucleatum subsp. nucleatum (strain ATCC 25586 / DSM 15643 / BCRC 10681 / CIP 101130 / JCM 8532 / KCTC 2640 / LMG 13131 / VPI 4355).